A 99-amino-acid polypeptide reads, in one-letter code: Putative regulatory protein Kole_1849 (99 aa).

It belongs to the RemA family.

This chain is Putative regulatory protein Kole_1849, found in Kosmotoga olearia (strain ATCC BAA-1733 / DSM 21960 / TBF 19.5.1).